Consider the following 378-residue polypeptide: Mitogen-activated protein kinase mpkC (378 aa).

A Protein kinase domain is found at 20-300 (YVNPQPIGMG…AQDALRHPYL (281 aa)). Residues 26–34 (IGMGSFGLV) and Lys-49 each bind ATP. Catalysis depends on Asp-141, which acts as the Proton acceptor.

The protein belongs to the protein kinase superfamily. Ser/Thr protein kinase family. MAP kinase subfamily. Requires Mg(2+) as cofactor.

Its subcellular location is the nucleus. It catalyses the reaction L-seryl-[protein] + ATP = O-phospho-L-seryl-[protein] + ADP + H(+). The catalysed reaction is L-threonyl-[protein] + ATP = O-phospho-L-threonyl-[protein] + ADP + H(+). Its activity is regulated as follows. Activated by threonine and tyrosine phosphorylation. Functionally, mitogen-activated protein kinase (MAPK), part of the high-osmolarity glycerol (HOG) pathway. With sakA, plays a role in the osmotic and oxidative stress responses. Involved in paradoxical growth, the cell wall integrity (CWI) pathway and biofilm formation. SakA and mpkC collaborate during virulence and mpkC could act by modulating sakA activity upon exposure to several types of stresses and during cell wall biosynthesis. The polypeptide is Mitogen-activated protein kinase mpkC (Aspergillus fumigatus (strain CBS 144.89 / FGSC A1163 / CEA10) (Neosartorya fumigata)).